A 94-amino-acid polypeptide reads, in one-letter code: Small ribosomal subunit protein uS19m (94 aa).

This sequence belongs to the universal ribosomal protein uS19 family.

Its subcellular location is the mitochondrion. The polypeptide is Small ribosomal subunit protein uS19m (RPS19) (Petunia hybrida (Petunia)).